The chain runs to 512 residues: 2,3-bisphosphoglycerate-independent phosphoglycerate mutase (512 aa).

Residues aspartate 12 and serine 62 each coordinate Mn(2+). Serine 62 serves as the catalytic Phosphoserine intermediate. Residues histidine 123, 153–154, arginine 185, arginine 191, 260–263, and lysine 333 contribute to the substrate site; these read RD and RPDR. The Mn(2+) site is built by aspartate 400, histidine 404, aspartate 441, histidine 442, and histidine 460.

Belongs to the BPG-independent phosphoglycerate mutase family. Monomer. The cofactor is Mn(2+).

It carries out the reaction (2R)-2-phosphoglycerate = (2R)-3-phosphoglycerate. It participates in carbohydrate degradation; glycolysis; pyruvate from D-glyceraldehyde 3-phosphate: step 3/5. Its function is as follows. Catalyzes the interconversion of 2-phosphoglycerate and 3-phosphoglycerate. This is 2,3-bisphosphoglycerate-independent phosphoglycerate mutase from Clostridium perfringens (strain ATCC 13124 / DSM 756 / JCM 1290 / NCIMB 6125 / NCTC 8237 / Type A).